The following is a 167-amino-acid chain: Peptide deformylase (167 aa).

Cys90 and His132 together coordinate Fe cation. The active site involves Glu133. His136 lines the Fe cation pocket.

It belongs to the polypeptide deformylase family. Fe(2+) serves as cofactor.

The enzyme catalyses N-terminal N-formyl-L-methionyl-[peptide] + H2O = N-terminal L-methionyl-[peptide] + formate. Its function is as follows. Removes the formyl group from the N-terminal Met of newly synthesized proteins. Requires at least a dipeptide for an efficient rate of reaction. N-terminal L-methionine is a prerequisite for activity but the enzyme has broad specificity at other positions. This chain is Peptide deformylase, found in Dehalococcoides mccartyi (strain CBDB1).